The sequence spans 95 residues: Acylphosphatase (95 aa).

The region spanning 5-93 (RAHLFIRGKV…GEFQDFRILP (89 aa)) is the Acylphosphatase-like domain. Residues arginine 20 and asparagine 38 contribute to the active site.

This sequence belongs to the acylphosphatase family.

It carries out the reaction an acyl phosphate + H2O = a carboxylate + phosphate + H(+). In Pyrobaculum arsenaticum (strain DSM 13514 / JCM 11321 / PZ6), this protein is Acylphosphatase (acyP).